Consider the following 202-residue polypeptide: Xanthine phosphoribosyltransferase (202 aa).

Xanthine-binding residues include L20 and N27. 128-132 serves as a coordination point for 5-phospho-alpha-D-ribose 1-diphosphate; that stretch reads ANGEA. Residue K156 participates in xanthine binding.

Belongs to the purine/pyrimidine phosphoribosyltransferase family. Xpt subfamily. As to quaternary structure, homodimer.

It is found in the cytoplasm. The enzyme catalyses XMP + diphosphate = xanthine + 5-phospho-alpha-D-ribose 1-diphosphate. Its pathway is purine metabolism; XMP biosynthesis via salvage pathway; XMP from xanthine: step 1/1. Functionally, converts the preformed base xanthine, a product of nucleic acid breakdown, to xanthosine 5'-monophosphate (XMP), so it can be reused for RNA or DNA synthesis. In Alkaliphilus metalliredigens (strain QYMF), this protein is Xanthine phosphoribosyltransferase.